The chain runs to 285 residues: MPPTVRQGIRTVGTLRVTRPSSYVLSSREFSVLNRPPPNYPGHIPLTTIERGALAVGSAIGSLLNPRRADLIAALGEATATPYFIYRLRDAMLSNPTGRRILRDRPRISSKTLSVEYLRSLPPNSVGRTYVNWLDREGVGPDSRETVRYIDDEECAYVMQRYRECHDFYHAVTGLPIVVEGEVALKTFEFANTLLPMTGLSMFAVMRLKPEERERYWELHLPWAVRSGLASKEVINVYWEEELERDVNELREKLGIEKPPDLREIRKMMRRQKKAAEAAREKYQN.

The N-terminal 11 residues, 1 to 11 (MPPTVRQGIRT), are a transit peptide targeting the mitochondrion. His166, Asp167, His170, and Glu182 together coordinate Zn(2+).

This sequence belongs to the COQ4 family. Component of a multi-subunit COQ enzyme complex, composed of at least COQ3, COQ4, COQ5, COQ6, COQ7 and COQ9. Zn(2+) serves as cofactor.

It is found in the mitochondrion inner membrane. The catalysed reaction is a 4-hydroxy-3-methoxy-5-(all-trans-polyprenyl)benzoate + H(+) = a 2-methoxy-6-(all-trans-polyprenyl)phenol + CO2. It functions in the pathway cofactor biosynthesis; ubiquinone biosynthesis. In terms of biological role, lyase that catalyzes the C1-decarboxylation of 4-hydroxy-3-methoxy-5-(all-trans-polyprenyl)benzoic acid into 2-methoxy-6-(all-trans-polyprenyl)phenol during ubiquinone biosynthesis. In Paracoccidioides brasiliensis (strain Pb18), this protein is Ubiquinone biosynthesis protein COQ4, mitochondrial.